Reading from the N-terminus, the 238-residue chain is Ditrans,polycis-undecaprenyl-diphosphate synthase ((2E,6E)-farnesyl-diphosphate specific) (238 aa).

Aspartate 14 is an active-site residue. Aspartate 14 lines the Mg(2+) pocket. Residues 15 to 18 (GNGR), tryptophan 19, arginine 27, histidine 31, and 59 to 61 (SSE) contribute to the substrate site. Asparagine 62 (proton acceptor) is an active-site residue. Substrate contacts are provided by residues tryptophan 63, arginine 65, arginine 182, and 188–190 (RIS). Residue glutamate 201 participates in Mg(2+) binding.

The protein belongs to the UPP synthase family. In terms of assembly, homodimer. It depends on Mg(2+) as a cofactor.

It catalyses the reaction 8 isopentenyl diphosphate + (2E,6E)-farnesyl diphosphate = di-trans,octa-cis-undecaprenyl diphosphate + 8 diphosphate. Functionally, catalyzes the sequential condensation of isopentenyl diphosphate (IPP) with (2E,6E)-farnesyl diphosphate (E,E-FPP) to yield (2Z,6Z,10Z,14Z,18Z,22Z,26Z,30Z,34E,38E)-undecaprenyl diphosphate (di-trans,octa-cis-UPP). UPP is the precursor of glycosyl carrier lipid in the biosynthesis of bacterial cell wall polysaccharide components such as peptidoglycan and lipopolysaccharide. The protein is Ditrans,polycis-undecaprenyl-diphosphate synthase ((2E,6E)-farnesyl-diphosphate specific) of Legionella pneumophila (strain Paris).